Here is a 166-residue protein sequence, read N- to C-terminus: Endoribonuclease YbeY (166 aa).

Residues H130, H134, and H140 each contribute to the Zn(2+) site.

The protein belongs to the endoribonuclease YbeY family. Zn(2+) serves as cofactor.

It localises to the cytoplasm. Functionally, single strand-specific metallo-endoribonuclease involved in late-stage 70S ribosome quality control and in maturation of the 3' terminus of the 16S rRNA. The chain is Endoribonuclease YbeY from Streptococcus uberis (strain ATCC BAA-854 / 0140J).